We begin with the raw amino-acid sequence, 150 residues long: Transcriptional repressor NrdR (150 aa).

Residues 3-34 (CPFCQHDHSKVIDSRVIDAGSAIRRRRECSKC) fold into a zinc finger. The 91-residue stretch at 46-136 (LLVVKRNGVT…VYKSFDSADD (91 aa)) folds into the ATP-cone domain.

It belongs to the NrdR family. Zn(2+) serves as cofactor.

In terms of biological role, negatively regulates transcription of bacterial ribonucleotide reductase nrd genes and operons by binding to NrdR-boxes. In Corynebacterium glutamicum (strain ATCC 13032 / DSM 20300 / JCM 1318 / BCRC 11384 / CCUG 27702 / LMG 3730 / NBRC 12168 / NCIMB 10025 / NRRL B-2784 / 534), this protein is Transcriptional repressor NrdR.